The primary structure comprises 1934 residues: Myosin-7 (1934 aa).

One can recognise a Myosin N-terminal SH3-like domain in the interval 31 to 80 (DLKKDVFVPDDKEEFVKAKIVSREGGKVTAETENGKTVTVKEDQVMQQNP). In terms of domain architecture, Myosin motor spans 84–777 (DKIEDMAMLT…LLGLLEEMRD (694 aa)). Position 128 is an N6,N6,N6-trimethyllysine (Lys128). 177–184 (GESGAGKT) contributes to the ATP binding site. Thr377 is subject to Phosphothreonine. 2 actin-binding regions span residues 654 to 676 (LNKL…IPNE) and 756 to 770 (KFGH…GLLG). Residues 780 to 809 (LSRIITRIQAQSRGLLSRMEFKKLLERRDS) form the IQ domain. A coiled-coil region spans residues 839–1934 (LKSAETEKEM…DIGAKGLNEE (1096 aa)). 2 positions are modified to phosphoserine: Ser1136 and Ser1268. Thr1281 bears the Phosphothreonine mark. At Tyr1307 the chain carries Phosphotyrosine. A Phosphothreonine modification is found at Thr1308. At Ser1509 the chain carries Phosphoserine. Thr1512 carries the phosphothreonine modification. The segment at 1914–1934 (SQVNKLRAKSRDIGAKGLNEE) is disordered. Basic and acidic residues predominate over residues 1922 to 1934 (KSRDIGAKGLNEE).

This sequence belongs to the TRAFAC class myosin-kinesin ATPase superfamily. Myosin family. Muscle myosin is a hexameric protein that consists of 2 heavy chain subunits (MHC), 2 alkali light chain subunits (MLC) and 2 regulatory light chain subunits (MLC-2). Interacts with ECPAS. Interacts (via C-terminus) with LRRC39.

It localises to the cytoplasm. Its subcellular location is the myofibril. It is found in the sarcomere. Its function is as follows. Myosins are actin-based motor molecules with ATPase activity essential for muscle contraction. Forms regular bipolar thick filaments that, together with actin thin filaments, constitute the fundamental contractile unit of skeletal and cardiac muscle. This Mesocricetus auratus (Golden hamster) protein is Myosin-7 (MYH7).